The chain runs to 928 residues: Tyrosine-protein phosphatase 3 (928 aa).

Position 75 is a phosphothreonine (threonine 75). Positions 111 to 232 (PDEKVLLLDV…FKILFPDHIN (122 aa)) constitute a Rhodanese domain. Residues 247 to 307 (KSPKTNLMNS…PRNVLSDSPM (61 aa)) form a disordered region. Serine 248 is subject to Phosphoserine. Composition is skewed to polar residues over residues 249 to 259 (PKTNLMNSLHN) and 265 to 275 (TATTPLSSPQM). A compositionally biased stretch (basic and acidic residues) spans 280–289 (KVPDDSRSDH). The span at 290–307 (SNFSSSPSPRNVLSDSPM) shows a compositional bias: low complexity. A phosphoserine mark is found at serine 297 and serine 368. Disordered regions lie at residues 467–487 (LTST…NKVQ) and 672–713 (MRKN…NNNN). One can recognise a Tyrosine-protein phosphatase domain in the interval 502–878 (YKSMLSLESD…IFIYDCLLFY (377 aa)). Over residues 672 to 691 (MRKNTMGTQNSSLYSAGVQG) the composition is skewed to polar residues. Over residues 692-713 (NSSNYSTDNDNDNDNNNNNNNN) the composition is skewed to low complexity. Residue cysteine 804 is the Phosphocysteine intermediate of the active site.

It belongs to the protein-tyrosine phosphatase family. Non-receptor class subfamily. Interacts with HOG1.

The protein resides in the cytoplasm. It catalyses the reaction O-phospho-L-tyrosyl-[protein] + H2O = L-tyrosyl-[protein] + phosphate. Major phosphatase responsible for tyrosine dephosphorylation of MAP kinases FUS3 and HOG1 to inactivate their activity; it also has important roles, along with MSG5, in the inactivation of FUS3 following pheromone stimulation. The protein is Tyrosine-protein phosphatase 3 (PTP3) of Saccharomyces cerevisiae (strain ATCC 204508 / S288c) (Baker's yeast).